Consider the following 431-residue polypeptide: Protein prenyltransferase alpha subunit repeat-containing protein 1-B (431 aa).

5 PFTA repeats span residues 85-118, 120-153, 178-211, 217-250, and 293-326; these read ELID…TLNP, KDLQ…VQEL, EEMH…GNLN, DELS…LCKT, and EEMK…HQLL. Residues 363–383 are disordered; the sequence is PMDVDGMSDPNKQGYTQETKR. A PFTA 6 repeat occupies 394 to 431; it reads SLDSELRFINCVLTNCCSPEQSRFAASYRKWLLSLQGY.

The protein belongs to the protein prenyltransferase subunit alpha family.

The sequence is that of Protein prenyltransferase alpha subunit repeat-containing protein 1-B (ptar1-b) from Xenopus laevis (African clawed frog).